Reading from the N-terminus, the 259-residue chain is DNA repair protein RecO (259 aa).

It belongs to the RecO family.

In terms of biological role, involved in DNA repair and RecF pathway recombination. This is DNA repair protein RecO from Syntrophus aciditrophicus (strain SB).